The sequence spans 1375 residues: DNA-directed RNA polymerase subunit beta (1375 aa).

Belongs to the RNA polymerase beta chain family. The RNAP catalytic core consists of 2 alpha, 1 beta, 1 beta' and 1 omega subunit. When a sigma factor is associated with the core the holoenzyme is formed, which can initiate transcription.

It carries out the reaction RNA(n) + a ribonucleoside 5'-triphosphate = RNA(n+1) + diphosphate. Functionally, DNA-dependent RNA polymerase catalyzes the transcription of DNA into RNA using the four ribonucleoside triphosphates as substrates. In Methylibium petroleiphilum (strain ATCC BAA-1232 / LMG 22953 / PM1), this protein is DNA-directed RNA polymerase subunit beta.